Here is a 401-residue protein sequence, read N- to C-terminus: Nicotinamide/nicotinic acid mononucleotide adenylyltransferase 1 (401 aa).

Disordered regions lie at residues 1–30 and 48–123; these read MDPTRAPDFKPPSADEELIPPPDPESKIPK and APFN…RGVQ. The segment covering 52–69 has biased composition (basic residues); the sequence is IKRKKKHPKHHHHHHHSR. Serine 91, serine 95, serine 96, and serine 111 each carry phosphoserine. 2 residues coordinate NAD(+): serine 173 and phenylalanine 174. Histidine 181 contributes to the ATP binding site. NAD(+)-binding residues include threonine 253, glycine 288, aspartate 290, tryptophan 301, arginine 320, and asparagine 351. An ATP-binding site is contributed by 356 to 359; that stretch reads TKVR.

The protein belongs to the eukaryotic NMN adenylyltransferase family. In terms of assembly, homotetramer. The cofactor is Ni(2+).

It is found in the cytoplasm. Its subcellular location is the nucleus. The catalysed reaction is beta-nicotinamide D-ribonucleotide + ATP + H(+) = diphosphate + NAD(+). It catalyses the reaction nicotinate beta-D-ribonucleotide + ATP + H(+) = deamido-NAD(+) + diphosphate. Its pathway is cofactor biosynthesis; NAD(+) biosynthesis; deamido-NAD(+) from nicotinate D-ribonucleotide: step 1/1. The protein operates within cofactor biosynthesis; NAD(+) biosynthesis; NAD(+) from nicotinamide D-ribonucleotide: step 1/1. Catalyzes the formation of NAD(+) from nicotinamide mononucleotide (NMN) and ATP. Can also use the deamidated form; nicotinic acid mononucleotide (NaMN) as substrate to form deamido-NAD(+) (NaAD). Key enzyme in both de novo and salvage pathways for NAD(+) biosynthesis. Predominantly acts in the salvage pathways via NMN. The sequence is that of Nicotinamide/nicotinic acid mononucleotide adenylyltransferase 1 from Saccharomyces cerevisiae (strain ATCC 204508 / S288c) (Baker's yeast).